Reading from the N-terminus, the 554-residue chain is Trichloroethene reductive dehalogenase (554 aa).

Residues 1 to 42 (MSEKYHSTVTRRDFMKRLGLAGAGAGALGAAVLAENNLPHEF) constitute a signal peptide (tat-type signal). 4Fe-4S ferredoxin-type domains are found at residues 425–457 (PTKP…HEGP) and 471–500 (EGWH…NNSW). [4Fe-4S] cluster contacts are provided by Cys-437, Cys-440, Cys-443, Cys-447, Cys-480, Cys-483, Cys-486, and Cys-490.

Belongs to the PceA family. The cofactor is [4Fe-4S] cluster. Corrinoid serves as cofactor. In terms of processing, predicted to be exported by the Tat system. The position of the signal peptide cleavage has been experimentally proven.

It localises to the cell membrane. The enzyme catalyses trichloroethene + AH2 = (Z)-1,2-dichloroethene + chloride + A + H(+). It catalyses the reaction (Z)-1,2-dichloroethene + AH2 = chloroethene + chloride + A + H(+). The catalysed reaction is 1,1-dichloroethene + AH2 = chloroethene + chloride + A + H(+). With respect to regulation, loses 93% of its activity upon incubation with 1-iodopropane and titanium(III) citrate in the dark. Subsequent exposure to light restores 80% of the original activity. Completely inhibited by 2 mM sodium sulfite or sodium dithionite, and by 1 mM cuprous chloride. Functionally, catalyzes the reductive dechlorination of trichloroethene (TCE) to cis-1,2-dichloroethene (DCE) and of cis-1,2-dichloroethene to chloroethene. The substrate specificity is broad, and the enzyme can dehalogenate various substrates, including 1,1-dichloroethene (1,1-DCE), 1,2-dichloroethane and 1,2-dibromoethane. A variety of other haloalkanes and haloalkenes containing three to five carbon atoms are dehalogenated at lower rates. Trans-1,2-dichloroethene (trans-DCE) and chloroethene are degraded at rates which are approximately 2 orders of magnitude lower. Titanium(III) citrate and methyl viologen can be used as reductants. The sequence is that of Trichloroethene reductive dehalogenase from Dehalococcoides mccartyi (strain ATCC BAA-2266 / KCTC 15142 / 195) (Dehalococcoides ethenogenes (strain 195)).